The sequence spans 295 residues: Cyclin-G1 (295 aa).

This sequence belongs to the cyclin family. Cyclin G subfamily.

It is found in the nucleus. In terms of biological role, may play a role in growth regulation. Is associated with G2/M phase arrest in response to DNA damage. May be an intermediate by which p53 mediates its role as an inhibitor of cellular proliferation. This chain is Cyclin-G1 (CCNG1), found in Pongo abelii (Sumatran orangutan).